The chain runs to 140 residues: DegV domain-containing 15.5 kDa protein (140 aa).

Positions 4-140 (QIIVTDSTSD…ELVLLQSKKI (137 aa)) constitute a DegV domain. 2 residues coordinate hexadecanoate: Thr61 and Ser93.

Functionally, may bind long-chain fatty acids, such as palmitate, and may play a role in lipid transport or fatty acid metabolism. This chain is DegV domain-containing 15.5 kDa protein, found in Staphylococcus aureus.